The chain runs to 346 residues: DNA-directed RNA polymerases I and III subunit RPAC1 (346 aa).

Position 2 is an N-acetylalanine (Ala-2). Residue Ser-4 is modified to Phosphoserine.

It belongs to the archaeal Rpo3/eukaryotic RPB3 RNA polymerase subunit family. In terms of assembly, component of the RNA polymerase I and RNA polymerase III complexes consisting of at least 13 and 17 subunits, respectively. Pol I complex consists of a ten-subunit catalytic core composed of POLR1A/RPA1, POLR1B/RPA2, POLR1C/RPAC1, POLR1D/RPAC2, POLR1H/RPA12, POLR2E/RPABC1, POLR2F/RPABC2, POLR2H/RPABC3, POLR2K/RPABC4 and POLR2L/RPABC5; a mobile stalk subunit POLR1F/RPA43 protruding from the core and additional subunits homologous to general transcription factors POLR1E/RPA49 and POLR1G/RPA34. Part of Pol I pre-initiation complex (PIC), in which Pol I core assembles with RRN3 and promoter-bound UTBF and SL1/TIF-IB complex. Pol III complex consists of a ten-subunit catalytic core composed of POLR3A/RPC1, POLR3B/RPC2, POLR1C/RPAC1, POLR1D/RPAC2, POLR3K/RPC10, POLR2E/RPABC1, POLR2F/RPABC2, POLR2H/RPABC3, POLR2K/RPABC4 and POLR2L/RPABC5; a mobile stalk composed of two subunits POLR3H/RPC8 and CRCP/RPC9, protruding from the core and functioning primarily in transcription initiation; and additional subunits homologous to general transcription factors of the RNA polymerase II machinery, POLR3C/RPC3-POLR3F/RPC6-POLR3G/RPC7 heterotrimer required for transcription initiation and POLR3D/RPC4-POLR3E/RPC5 heterodimer involved in both transcription initiation and termination.

It localises to the nucleus. Its subcellular location is the nucleolus. The protein localises to the cytoplasm. It is found in the cytosol. Functionally, DNA-dependent RNA polymerase catalyzes the transcription of DNA into RNA using the four ribonucleoside triphosphates as substrates. Common component of RNA polymerases I and III which synthesize ribosomal RNA precursors and short non-coding RNAs including 5S rRNA, snRNAs, tRNAs and miRNAs, respectively. POLR1C/RPAC1 is part of the polymerase core and may function as a clamp element that moves to open and close the cleft. In Homo sapiens (Human), this protein is DNA-directed RNA polymerases I and III subunit RPAC1.